The primary structure comprises 576 residues: Eukaryotic translation initiation factor 2A (576 aa).

4 WD repeats span residues 71-119 (LPAA…LVFS), 266-307 (DREG…VSII), 308-349 (PPAP…KKIT), and 351-396 (VEAA…MFYE). 2 disordered regions span residues 422–461 (SASL…QNST) and 475–505 (GSAN…NNKK). Positions 475–486 (GSANKHVNSSRQ) are enriched in polar residues.

This sequence belongs to the WD repeat EIF2A family.

Its subcellular location is the cytoplasm. In terms of biological role, functions in the early steps of protein synthesis of a small number of specific mRNAs. Acts by directing the binding of methionyl-tRNAi to 40S ribosomal subunits. In contrast to the eIF-2 complex, it binds methionyl-tRNAi to 40S subunits in a codon-dependent manner, whereas the eIF-2 complex binds methionyl-tRNAi to 40S subunits in a GTP-dependent manner. The chain is Eukaryotic translation initiation factor 2A from Schizosaccharomyces pombe (strain 972 / ATCC 24843) (Fission yeast).